The primary structure comprises 109 residues: Immunity protein CdiI (109 aa).

As to quaternary structure, specifically interacts with cognate toxin CdiA, which inhibits the toxin.

In terms of biological role, immunity protein component of a toxin-immunity protein module, which functions as a cellular contact-dependent growth inhibition (CDI) system. CDI modules allow bacteria to communicate with and inhibit the growth of closely related neighboring bacteria in a contact-dependent fashion. Neutralizes the toxic activity of cognate toxin CdiA (C-terminal 160 residue CT fragment) upon expression in E.coli. Does not inhibit toxic activity of CdiA from other strains of B.pseudomallei. This is Immunity protein CdiI (cdiI) from Burkholderia pseudomallei (Pseudomonas pseudomallei).